A 493-amino-acid polypeptide reads, in one-letter code: Serine/threonine-protein kinase PBL34 (493 aa).

Disordered stretches follow at residues 1 to 42 (MGLD…EEEE) and 84 to 117 (SKSA…TPVI). A lipid anchor (N-myristoyl glycine) is attached at glycine 2. A compositionally biased stretch (basic and acidic residues) spans 12 to 37 (WKSEKPKETENKNHKKKNGDDNKSRN). A compositionally biased stretch (low complexity) spans 100-114 (SSTTTTSNAESSSST). Threonine 131 is modified (phosphothreonine). One can recognise a Protein kinase domain in the interval 142-428 (FRPESLLGEG…VEALKPLPHL (287 aa)). ATP-binding positions include 148–156 (LGEGGFGCV) and lysine 180. The residue at position 225 (tyrosine 225) is a Phosphotyrosine. The active-site Proton acceptor is aspartate 275. Position 279 is a phosphoserine (serine 279). Threonine 306 carries the phosphothreonine modification. The residue at position 309 (serine 309) is a Phosphoserine. Residues threonine 310 and threonine 315 each carry the phosphothreonine modification. Position 323 is a phosphotyrosine (tyrosine 323). The disordered stretch occupies residues 447–493 (KNGSGRSQGFGSRNGQHQPVFRTLSSPHGSSPYRHQIPSPKPKGATT). Polar residues predominate over residues 450–475 (SGRSQGFGSRNGQHQPVFRTLSSPHG).

The protein belongs to the protein kinase superfamily. Ser/Thr protein kinase family. Interacts with the Xanthomonas campestris effector XopAC/AvrAC. Interacts with SD129. Post-translationally, phosphorylated by SD129 at Thr-306 and Thr-310 in response to the pathogen-associated molecular pattern (PAMP) 3-OH-C10:0, a medium-chain 3-hydroxy fatty acid.

Its subcellular location is the cell membrane. It catalyses the reaction L-seryl-[protein] + ATP = O-phospho-L-seryl-[protein] + ADP + H(+). The catalysed reaction is L-threonyl-[protein] + ATP = O-phospho-L-threonyl-[protein] + ADP + H(+). In terms of biological role, involved in chitin-triggered immune signaling and is required for reactive oxygen species (ROS) production. Acts downstream of SD129 in defense signaling triggered by the pathogen-associated molecular pattern (PAMP) 3-OH-C10:0, a medium-chain 3-hydroxy fatty acid. The protein is Serine/threonine-protein kinase PBL34 of Arabidopsis thaliana (Mouse-ear cress).